The following is a 207-amino-acid chain: Protein lin-7 homolog B (207 aa).

The short motif at 1 to 13 is the Kinase interacting site element; it reads MAALVEPLGLERD. In terms of domain architecture, L27 spans 10 to 65; it reads LERDVSRAVELLERLQRSGELPPQKLQALQRVLQSRFCSAIREVYEQLYDTLDITG. The 83-residue stretch at 93 to 175 folds into the PDZ domain; that stretch reads VVELPKTDEG…SVKLVVRYTP (83 aa). Positions 187–207 are disordered; it reads KMRSARRRQQHHSYSSLESRG. Polar residues predominate over residues 198–207; the sequence is HSYSSLESRG.

The protein belongs to the lin-7 family. As to quaternary structure, forms two exclusive ternary complexes with CASK and CASKIN1. The brain-specific heterotrimeric complex (LIN-10-LIN-2-LIN-7 complex) composed of at least APBA1, CASK, and LIN7, associates with the motor protein KIF17 to transport vesicles along microtubules. Forms a heterotrimeric complex composed of MMP5, LIN7B and PATJ; the N-terminal L27 domain of PALS1 interacts with the L27 domain of PATJ and the C-terminal L27 domain of PALS1 interacts with the L27 domain of LIN7B. Forms a heterotrimeric complex with DLG1 and CASK via their L27 domains. Interacts with DLG4 and GRIN2B as well as CDH1 and CTNNB1, the channels KCNJ12/Kir2.2, KCNJ4/Kir2.3 and probably KCNJ2/Kir2.1 and SLC6A12/BGT-1 via its PDZ domain. The association of LIN7A with cadherin and beta-catenin is calcium-dependent, occurs at synaptic junctions and requires the actin cytoskeleton. Interacts with EGFR, ERBB2, ERBB3 and ERBB4 with both PDZ and KID domains. Associates with KIF17 via APBA1. Interacts with ASIC3. Interacts with TOPK. Interacts with RTKN. Interacts with APBA1. Interacts with MPP7. Interacts with DLG2. Interacts with DLG3. Expressed only in brain.

It localises to the cell membrane. Its subcellular location is the basolateral cell membrane. The protein resides in the cell junction. The protein localises to the postsynaptic density membrane. It is found in the tight junction. Functionally, plays a role in establishing and maintaining the asymmetric distribution of channels and receptors at the plasma membrane of polarized cells. Forms membrane-associated multiprotein complexes that may regulate delivery and recycling of proteins to the correct membrane domains. The tripartite complex composed of LIN7 (LIN7A, LIN7B or LIN7C), CASK and APBA1 associates with the motor protein KIF17 to transport vesicles containing N-methyl-D-aspartate (NMDA) receptor subunit NR2B along microtubules. This complex may have the potential to couple synaptic vesicle exocytosis to cell adhesion in brain. Ensures the proper localization of GRIN2B (subunit 2B of the NMDA receptor) to neuronal postsynaptic density and may function in localizing synaptic vesicles at synapses where it is recruited by beta-catenin and cadherin. Required to localize Kir2 channels, GABA transporter (SLC6A12) and EGFR/ERBB1, ERBB2, ERBB3 and ERBB4 to the basolateral membrane of epithelial cells. May increase the amplitude of ASIC3 acid-evoked currents by stabilizing the channel at the cell surface. In Rattus norvegicus (Rat), this protein is Protein lin-7 homolog B (Lin7b).